A 526-amino-acid polypeptide reads, in one-letter code: Light-independent protochlorophyllide reductase subunit B (526 aa).

D36 is a binding site for [4Fe-4S] cluster. D290 acts as the Proton donor in catalysis. Residue 425-426 coordinates substrate; it reads GL.

The protein belongs to the ChlB/BchB/BchZ family. In terms of assembly, protochlorophyllide reductase is composed of three subunits; ChlL, ChlN and ChlB. Forms a heterotetramer of two ChlB and two ChlN subunits. The cofactor is [4Fe-4S] cluster.

The catalysed reaction is chlorophyllide a + oxidized 2[4Fe-4S]-[ferredoxin] + 2 ADP + 2 phosphate = protochlorophyllide a + reduced 2[4Fe-4S]-[ferredoxin] + 2 ATP + 2 H2O. Its pathway is porphyrin-containing compound metabolism; chlorophyll biosynthesis (light-independent). In terms of biological role, component of the dark-operative protochlorophyllide reductase (DPOR) that uses Mg-ATP and reduced ferredoxin to reduce ring D of protochlorophyllide (Pchlide) to form chlorophyllide a (Chlide). This reaction is light-independent. The NB-protein (ChlN-ChlB) is the catalytic component of the complex. The chain is Light-independent protochlorophyllide reductase subunit B from Prochlorococcus marinus (strain MIT 9515).